The primary structure comprises 592 residues: Nucleolar protein 58 (592 aa).

Positions 285–410 (IAPNLTALVG…LERKLAAMEG (126 aa)) constitute a Nop domain. Residues 443–592 (DADALSSDEP…QKKKKKKGEE (150 aa)) form a disordered region. Positions 450–462 (DEPKSKKDKKLIE) are enriched in basic and acidic residues. A compositionally biased stretch (acidic residues) spans 463–478 (EVSDEEMADADSDEEP). 2 stretches are compositionally biased toward basic and acidic residues: residues 505–515 (GKDAELEKLAE) and 557–571 (KKAS…KRSD). Positions 582–592 (KQKKKKKKGEE) are enriched in basic residues.

The protein belongs to the NOP5/NOP56 family.

It localises to the nucleus. The protein localises to the nucleolus. Its function is as follows. Required for pre-18S rRNA processing. May bind microtubules. This is Nucleolar protein 58 (nop58) from Aspergillus clavatus (strain ATCC 1007 / CBS 513.65 / DSM 816 / NCTC 3887 / NRRL 1 / QM 1276 / 107).